A 50-amino-acid chain; its full sequence is Apoptotic protease-activating factor 1 (50 aa).

In terms of domain architecture, CARD spans 1-31 (ILKKDNYSYISFYNALIHEGYKDLAALLHSG). The NB-ARC domain occupies 46–50 (GGITS).

Monomer. Oligomerizes to a heptameric ring, known as the apoptosome, upon binding of cytochrome c and dATP. Oligomeric Apaf-1 and pro-caspase-9 bind to each other via their respective NH2-terminal CARD domains and consecutively mature caspase-9 is released from the complex. Interacts with APIP. Interacts (via CARD and NACHT domains) with NAIP/BIRC1 (via NACHT domain). Interacts with CIAO2A.

Oligomeric Apaf-1 mediates the cytochrome c-dependent autocatalytic activation of pro-caspase 9 (Apaf-3), leading to the activation of caspase-3 and apoptosis. This activation requires ATP. The protein is Apoptotic protease-activating factor 1 (APAF1) of Canis lupus familiaris (Dog).